A 150-amino-acid chain; its full sequence is Ribonuclease pancreatic delta-type (150 aa).

The signal sequence occupies residues 1–25; sequence MGLEKSFILFSLLVLVLGWVQPSLG. Residue arginine 35 coordinates substrate. The Proton acceptor role is filled by histidine 37. 4 cysteine pairs are disulfide-bonded: cysteine 51–cysteine 110, cysteine 65–cysteine 121, cysteine 83–cysteine 136, and cysteine 90–cysteine 98. Substrate contacts are provided by residues 66-70, lysine 91, and arginine 111; that span reads KRVNT. Histidine 145 (proton donor) is an active-site residue.

It belongs to the pancreatic ribonuclease family. Monomer.

It localises to the secreted. It carries out the reaction an [RNA] containing cytidine + H2O = an [RNA]-3'-cytidine-3'-phosphate + a 5'-hydroxy-ribonucleotide-3'-[RNA].. The catalysed reaction is an [RNA] containing uridine + H2O = an [RNA]-3'-uridine-3'-phosphate + a 5'-hydroxy-ribonucleotide-3'-[RNA].. Endonuclease that catalyzes the cleavage of RNA on the 3' side of pyrimidine nucleotides. Acts on single-stranded and double-stranded RNA. In Rattus norvegicus (Rat), this protein is Ribonuclease pancreatic delta-type (Rnase1d).